Consider the following 141-residue polypeptide: Nucleoside diphosphate kinase (141 aa).

ATP is bound by residues lysine 11, phenylalanine 59, arginine 87, threonine 93, arginine 104, and asparagine 114. Histidine 117 (pros-phosphohistidine intermediate) is an active-site residue.

The protein belongs to the NDK family. As to quaternary structure, homotetramer. Requires Mg(2+) as cofactor.

The protein resides in the cytoplasm. The catalysed reaction is a 2'-deoxyribonucleoside 5'-diphosphate + ATP = a 2'-deoxyribonucleoside 5'-triphosphate + ADP. It carries out the reaction a ribonucleoside 5'-diphosphate + ATP = a ribonucleoside 5'-triphosphate + ADP. Functionally, major role in the synthesis of nucleoside triphosphates other than ATP. The ATP gamma phosphate is transferred to the NDP beta phosphate via a ping-pong mechanism, using a phosphorylated active-site intermediate. This chain is Nucleoside diphosphate kinase, found in Yersinia enterocolitica serotype O:8 / biotype 1B (strain NCTC 13174 / 8081).